The primary structure comprises 763 residues: Palmitoyltransferase AKR1 (763 aa).

Over residues Met1–Ser15 the composition is skewed to polar residues. The segment at Met1–Leu59 is disordered. Residues Met1–Lys307 are Cytoplasmic-facing. 7 ANK repeats span residues Pro57–Ser87, Glu92–Ser121, Leu126–Thr155, Gln159–Ile188, Lys197–Ile226, Gly230–Gln259, and Asn292–Phe322. Residues Ile308 to Phe325 traverse the membrane as a helical segment. Topologically, residues Ser326 to Ile330 are lumenal. A helical transmembrane segment spans residues Leu331–Ile348. Topologically, residues Lys349 to Lys368 are cytoplasmic. Residues Ser369–Leu389 traverse the membrane as a helical segment. At Arg390–Leu401 the chain is on the lumenal side. The helical transmembrane segment at Gly402 to Phe422 threads the bilayer. Residues Ser423–Lys497 are Cytoplasmic-facing. The 51-residue stretch at Ser454–Leu504 folds into the DHHC domain. The active-site S-palmitoyl cysteine intermediate is the Cys484. The helical transmembrane segment at Leu498–Leu518 threads the bilayer. The Lumenal segment spans residues Lys519–Arg546. A helical membrane pass occupies residues Phe547–Ile567. Topologically, residues Val568–Val763 are cytoplasmic.

The protein belongs to the DHHC palmitoyltransferase family. AKR/ZDHHC17 subfamily.

Its subcellular location is the early endosome membrane. The protein localises to the golgi apparatus membrane. The catalysed reaction is L-cysteinyl-[protein] + hexadecanoyl-CoA = S-hexadecanoyl-L-cysteinyl-[protein] + CoA. Functionally, palmitoyltransferase specific for casein kinase 1. This is Palmitoyltransferase AKR1 (AKR1) from Candida glabrata (strain ATCC 2001 / BCRC 20586 / JCM 3761 / NBRC 0622 / NRRL Y-65 / CBS 138) (Yeast).